The primary structure comprises 104 residues: Large ribosomal subunit protein bL21 (104 aa).

The protein belongs to the bacterial ribosomal protein bL21 family. As to quaternary structure, part of the 50S ribosomal subunit. Contacts protein L20.

This protein binds to 23S rRNA in the presence of protein L20. The sequence is that of Large ribosomal subunit protein bL21 from Opitutus terrae (strain DSM 11246 / JCM 15787 / PB90-1).